The sequence spans 485 residues: NADH-quinone oxidoreductase subunit N (485 aa).

A run of 14 helical transmembrane segments spans residues 10–30 (AMLP…SIAW), 35–55 (FINA…LYFV), 75–95 (FYIG…YPWL), 104–124 (EFYL…SANH), 125–145 (LASL…LIGY), 159–179 (YMLL…LLYA), 203–223 (ILAG…LVPF), 235–255 (PAPV…AVVM), 271–291 (LVLS…AISQ), 297–317 (LLGY…VAVQ), 327–347 (GVYL…VSLM), 374–394 (AVMT…GFIG), 408–427 (WWLT…YYLR), and 449–469 (ALTA…VLGI).

This sequence belongs to the complex I subunit 2 family. In terms of assembly, NDH-1 is composed of 13 different subunits. Subunits NuoA, H, J, K, L, M, N constitute the membrane sector of the complex.

The protein localises to the cell inner membrane. The catalysed reaction is a quinone + NADH + 5 H(+)(in) = a quinol + NAD(+) + 4 H(+)(out). NDH-1 shuttles electrons from NADH, via FMN and iron-sulfur (Fe-S) centers, to quinones in the respiratory chain. The immediate electron acceptor for the enzyme in this species is believed to be ubiquinone. Couples the redox reaction to proton translocation (for every two electrons transferred, four hydrogen ions are translocated across the cytoplasmic membrane), and thus conserves the redox energy in a proton gradient. This is NADH-quinone oxidoreductase subunit N from Yersinia enterocolitica serotype O:8 / biotype 1B (strain NCTC 13174 / 8081).